The chain runs to 311 residues: Systemic RNA interference defective protein 2 (311 aa).

A signal peptide spans 1–20; it reads MPRFVYFCFALIALLPISWT. Over 21-188 the chain is Extracellular; it reads MDGILITDVE…EETKTVVNKN (168 aa). The helical transmembrane segment at 189–209 threads the bilayer; that stretch reads GGAVAVAVIEGIALIAILAFL. The Cytoplasmic segment spans residues 210 to 311; it reads GYRTMVNHKL…NDPFATLESW (102 aa). Polar residues predominate over residues 287–301; the sequence is NSSAAQPSTTSNGQF. A disordered region spans residues 287–311; the sequence is NSSAAQPSTTSNGQFNDPFATLESW.

As to expression, expressed in the intestinal lumen. Also present, at lower levels, in the excretory duct cells.

It is found in the apical cell membrane. Its subcellular location is the cytoplasm. In terms of biological role, plays a role in RNA-mediated gene silencing by mediating endocytic uptake of double-stranded RNA (dsRNA) ingested from the environment into intestinal cells from the intestinal lumen. Selective for dsRNAs of at least 50 bp. Required for avoidance behavior induced by small RNAs derived from pathogenic bacteria such as P.aeruginosa. The protein is Systemic RNA interference defective protein 2 of Caenorhabditis elegans.